The following is a 1814-amino-acid chain: U3 small nucleolar RNA-associated protein 10 (1814 aa).

Residues 583–620 (LDFQALLPFLLVALTDASERVRREAAAALAAVGSLYKK) form an HEAT 1 repeat. 2 helical membrane passes run 942 to 962 (IQSG…AIVN) and 998 to 1018 (ALLL…HSVM). HEAT repeat units lie at residues 1042 to 1079 (QTID…AFEH), 1249 to 1286 (LTLV…QNPE), 1293 to 1331 (IRVL…KYGK), and 1770 to 1807 (ALLP…VLGE).

It belongs to the HEATR1/UTP10 family. As to quaternary structure, component of the ribosomal small subunit (SSU) processome.

The protein resides in the nucleus. The protein localises to the nucleolus. Its subcellular location is the membrane. Its function is as follows. Involved in nucleolar processing of pre-18S ribosomal RNA. Involved in ribosome biosynthesis. In Neosartorya fischeri (strain ATCC 1020 / DSM 3700 / CBS 544.65 / FGSC A1164 / JCM 1740 / NRRL 181 / WB 181) (Aspergillus fischerianus), this protein is U3 small nucleolar RNA-associated protein 10.